A 482-amino-acid polypeptide reads, in one-letter code: Class E basic helix-loop-helix protein 41 (482 aa).

Residue Lys-31 forms a Glycyl lysine isopeptide (Lys-Gly) (interchain with G-Cter in SUMO2) linkage. The region spanning 44–99 is the bHLH domain; that stretch reads TYKLPHRLIEKKRRDRINECIAQLKDLLPEHLKLTTLGHLEKAVVLELTLKHLKAL. Residues 67 to 71 are necessary for interaction with RXRA and repressor activity towards RXRA; it reads LKDLL. Lys-121 participates in a covalent cross-link: Glycyl lysine isopeptide (Lys-Gly) (interchain with G-Cter in SUMO2). The 36-residue stretch at 131-166 folds into the Orange domain; that stretch reads FHSGFQTCAKEVLQYLSRFESWTPREPRCVQLINHL. Lys-210 participates in a covalent cross-link: Glycyl lysine isopeptide (Lys-Gly) (interchain with G-Cter in SUMO2). Disordered regions lie at residues 228-298 and 438-482; these read AELA…GGAA and VAPL…KEAP. Basic and acidic residues predominate over residues 246–256; that stretch reads AEARPDREKGK. Lys-266 participates in a covalent cross-link: Glycyl lysine isopeptide (Lys-Gly) (interchain with G-Cter in SUMO2). Positions 285–297 are enriched in gly residues; it reads RGGGSGGGPGGGA.

As to quaternary structure, homodimer. Heterodimer with BHLHE40/DEC1. Interacts with CIART and BMAL1. Interacts with RXRA. Interacts with NR0B2 and HNF1A. As to expression, highly expressed in skeletal muscle and brain, moderately expressed in pancreas and heart, weakly expressed in placenta, lung, liver and kidney.

The protein resides in the nucleus. Its function is as follows. Transcriptional repressor involved in the regulation of the circadian rhythm by negatively regulating the activity of the clock genes and clock-controlled genes. Acts as the negative limb of a novel autoregulatory feedback loop (DEC loop) which differs from the one formed by the PER and CRY transcriptional repressors (PER/CRY loop). Both these loops are interlocked as it represses the expression of PER1 and in turn is repressed by PER1/2 and CRY1/2. Represses the activity of the circadian transcriptional activator: CLOCK-BMAL1 heterodimer by competing for the binding to E-box elements (5'-CACGTG-3') found within the promoters of its target genes. Negatively regulates its own expression and the expression of DBP and BHLHE41/DEC2. Acts as a corepressor of RXR and the RXR-LXR heterodimers and represses the ligand-induced RXRA/B/G, NR1H3/LXRA, NR1H4 and VDR transactivation activity. Inhibits HNF1A-mediated transactivation of CYP1A2, CYP2E1 AND CYP3A11. The protein is Class E basic helix-loop-helix protein 41 of Homo sapiens (Human).